The primary structure comprises 427 residues: Adenylosuccinate synthetase (427 aa).

GTP contacts are provided by residues 12 to 18 (GDEGKGK) and 40 to 42 (GHT). Residue Asp13 is the Proton acceptor of the active site. Residues Asp13 and Gly40 each contribute to the Mg(2+) site. IMP is bound by residues 13–16 (DEGK), 38–41 (NAGH), Thr130, Arg144, Gln224, Thr239, and Arg303. His41 serves as the catalytic Proton donor. 299–305 (SVTGRPR) is a substrate binding site. GTP contacts are provided by residues Arg305, 331–333 (KLD), and 411–413 (SVG).

It belongs to the adenylosuccinate synthetase family. As to quaternary structure, homodimer. The cofactor is Mg(2+).

It localises to the cytoplasm. It carries out the reaction IMP + L-aspartate + GTP = N(6)-(1,2-dicarboxyethyl)-AMP + GDP + phosphate + 2 H(+). The protein operates within purine metabolism; AMP biosynthesis via de novo pathway; AMP from IMP: step 1/2. In terms of biological role, plays an important role in the de novo pathway of purine nucleotide biosynthesis. Catalyzes the first committed step in the biosynthesis of AMP from IMP. The sequence is that of Adenylosuccinate synthetase from Sorangium cellulosum (strain So ce56) (Polyangium cellulosum (strain So ce56)).